The sequence spans 1036 residues: Lethal(2) giant larvae protein homolog 1 (1036 aa).

10 WD repeats span residues 38 to 71 (SALAFDPELRIMAIGTRSGAVKIYGAPGVEFTGL), 78 to 119 (VTQM…GLSF), 139 to 175 (VTVVLLAAGDTVVLGTESGSIFFLDVATLALLEGQTL), 199 to 233 (SLQGHLQDPSKILIGYSRGLLVIWSQATQSVEHVF), 239 to 271 (LESLCWGRGGSNIISSHSDGSYAIWSTDTGSPP), 289 to 331 (AINK…ETLV), 339 to 373 (VIDFFTVHSTQPEDGFDNPQALAVLLEEELVVLDL), 395 to 473 (TCSA…YKLS), 517 to 592 (QKVA…RVLI), and 601 to 662 (TAVA…LRQS). At serine 662 the chain carries Phosphoserine. A disordered region spans residues 670–694 (RVSGKKRATTASSKLQEANAQLAEQ). Positions 678-693 (TTASSKLQEANAQLAE) are enriched in polar residues. WD repeat units lie at residues 722–782 (VRCL…KEVQ), 791–843 (AIAV…VSAK), 848–901 (LTAH…VHYS), and 915–938 (VFTRHGQGFYLISPSEFERFSLSA). Threonine 957 carries the phosphothreonine modification. Phosphoserine is present on residues serine 964, serine 982, and serine 989. The disordered stretch occupies residues 980 to 1002 (PESCEGSPSSAHSKRADTMEPPE).

It belongs to the WD repeat L(2)GL family. Associated with nonmuscle myosin II heavy chain. Interacts with PRKCI/aPKC, PARD6B/Par-6 and PARD6A. Interacts with STX4A. Interacts with DCAF1. Interacts with RAB10 (GDP-bound form); the interaction is direct and promotes RAB10 association with membranes and activation through competition with the Rab inhibitor GDI1. Phosphorylated by PRKCI. As to expression, expressed at high level in the testis and at lower level in ovary, brain, spleen and kidney.

The protein localises to the early endosome membrane. It localises to the golgi apparatus. It is found in the trans-Golgi network membrane. The protein resides in the golgi apparatus membrane. Its subcellular location is the cell projection. The protein localises to the axon. It localises to the cytoplasm. It is found in the cytoskeleton. Cortical cytoskeleton protein found in a complex involved in maintaining cell polarity and epithelial integrity. Involved in the regulation of mitotic spindle orientation, proliferation, differentiation and tissue organization of neuroepithelial cells. Involved in axonogenesis through RAB10 activation thereby regulating vesicular membrane trafficking toward the axonal plasma membrane. This is Lethal(2) giant larvae protein homolog 1 (Llgl1) from Rattus norvegicus (Rat).